The sequence spans 338 residues: MKRMIALDGAQGEGGGQILRSALSLSMITGQPFTITSIRAGRAKPGLLRQHLTAVKAAAEICRATVEGAELGSQRLVFRPGTVRGGEYRFAIGSAGSCTLVLQTVLPALWFADGPSRVEVSGGTDNPSAPPADFIRRVLEPLLAKIGIHQQTTLLRHGFYPAGGGVVATEVSPVASFNTLQLGERGNIVQMRGEVLLAGVSRHVAEREIATLAGSFSLHEQNIHNLPRDQGPGNTVSLEVESENITERFFVVGEKRVSAEVVAAQLVKEVKRYLASPAAVGEYLADQLVLPMALAGAGEFKVAHPSCHLLTNIAVVERFLPVRFGLIETDGVTRVSIE.

ATP is bound by residues Gln-103 and 283 to 287; that span reads YLADQ. The active-site Tele-AMP-histidine intermediate is His-308.

Belongs to the RNA 3'-terminal cyclase family. Type 1 subfamily.

The protein localises to the cytoplasm. It catalyses the reaction a 3'-end 3'-phospho-ribonucleotide-RNA + ATP = a 3'-end 2',3'-cyclophospho-ribonucleotide-RNA + AMP + diphosphate. Its function is as follows. Catalyzes the conversion of 3'-phosphate to a 2',3'-cyclic phosphodiester at the end of RNA. The mechanism of action of the enzyme occurs in 3 steps: (A) adenylation of the enzyme by ATP; (B) transfer of adenylate to an RNA-N3'P to produce RNA-N3'PP5'A; (C) and attack of the adjacent 2'-hydroxyl on the 3'-phosphorus in the diester linkage to produce the cyclic end product. The biological role of this enzyme is unknown but it is likely to function in some aspects of cellular RNA processing. This is RNA 3'-terminal phosphate cyclase from Escherichia coli O8 (strain IAI1).